Here is a 511-residue protein sequence, read N- to C-terminus: Probable DNA ligase (511 aa).

E208 lines the ATP pocket. K210 acts as the N6-AMP-lysine intermediate in catalysis. Residues R215, R230, E259, F299, R377, and K383 each contribute to the ATP site.

Belongs to the ATP-dependent DNA ligase family. Requires Mg(2+) as cofactor.

The enzyme catalyses ATP + (deoxyribonucleotide)n-3'-hydroxyl + 5'-phospho-(deoxyribonucleotide)m = (deoxyribonucleotide)n+m + AMP + diphosphate.. DNA ligase that seals nicks in double-stranded DNA during DNA replication, DNA recombination and DNA repair. This is Probable DNA ligase from Streptomyces griseus subsp. griseus (strain JCM 4626 / CBS 651.72 / NBRC 13350 / KCC S-0626 / ISP 5235).